The following is a 153-amino-acid chain: Aspartate carbamoyltransferase regulatory chain (153 aa).

C109, C114, C138, and C141 together coordinate Zn(2+).

Belongs to the PyrI family. In terms of assembly, contains catalytic and regulatory chains. Zn(2+) serves as cofactor.

Its function is as follows. Involved in allosteric regulation of aspartate carbamoyltransferase. This is Aspartate carbamoyltransferase regulatory chain from Salmonella newport (strain SL254).